The chain runs to 436 residues: Divalent metal cation transporter MntH (436 aa).

The segment covering Met-1 to Ala-22 has biased composition (basic and acidic residues). A disordered region spans residues Met-1–Thr-31. 11 helical membrane passes run Ile-40–Phe-60, Gly-71–Leu-91, Leu-115–Phe-135, Leu-144–Leu-164, Leu-177–Ala-197, Gly-216–Leu-236, Val-264–Ala-284, Leu-304–Gly-324, Leu-354–Leu-374, Ile-375–Phe-395, and Phe-411–Trp-431.

This sequence belongs to the NRAMP family.

Its subcellular location is the cell membrane. Its function is as follows. H(+)-stimulated, divalent metal cation uptake system. This Deinococcus radiodurans (strain ATCC 13939 / DSM 20539 / JCM 16871 / CCUG 27074 / LMG 4051 / NBRC 15346 / NCIMB 9279 / VKM B-1422 / R1) protein is Divalent metal cation transporter MntH.